We begin with the raw amino-acid sequence, 218 residues long: Cytidylate kinase (218 aa).

Position 11–19 (Gly11–Thr19) interacts with ATP.

This sequence belongs to the cytidylate kinase family. Type 1 subfamily.

It localises to the cytoplasm. It carries out the reaction CMP + ATP = CDP + ADP. The enzyme catalyses dCMP + ATP = dCDP + ADP. The sequence is that of Cytidylate kinase from Neisseria gonorrhoeae (strain ATCC 700825 / FA 1090).